The primary structure comprises 322 residues: Biotin synthase (322 aa).

The region spanning 39–266 (NQVQISSLLN…KSVVRLSAGR (228 aa)) is the Radical SAM core domain. Positions 54, 58, and 61 each coordinate [4Fe-4S] cluster. Positions 98, 129, 189, and 261 each coordinate [2Fe-2S] cluster.

It belongs to the radical SAM superfamily. Biotin synthase family. In terms of assembly, homodimer. The cofactor is [4Fe-4S] cluster. Requires [2Fe-2S] cluster as cofactor.

It carries out the reaction (4R,5S)-dethiobiotin + (sulfur carrier)-SH + 2 reduced [2Fe-2S]-[ferredoxin] + 2 S-adenosyl-L-methionine = (sulfur carrier)-H + biotin + 2 5'-deoxyadenosine + 2 L-methionine + 2 oxidized [2Fe-2S]-[ferredoxin]. It participates in cofactor biosynthesis; biotin biosynthesis; biotin from 7,8-diaminononanoate: step 2/2. Functionally, catalyzes the conversion of dethiobiotin (DTB) to biotin by the insertion of a sulfur atom into dethiobiotin via a radical-based mechanism. The polypeptide is Biotin synthase (Vesicomyosocius okutanii subsp. Calyptogena okutanii (strain HA)).